The primary structure comprises 358 residues: Glycerol-3-phosphate dehydrogenase [NAD(P)+] (358 aa).

Residues Ser-33, Phe-34, Arg-54, and Lys-128 each coordinate NADPH. Sn-glycerol 3-phosphate is bound by residues Lys-128 and Gly-156. Ala-160 contributes to the NADPH binding site. 5 residues coordinate sn-glycerol 3-phosphate: Lys-211, Asp-264, Ser-274, Arg-275, and Asn-276. Lys-211 (proton acceptor) is an active-site residue. Residue Arg-275 participates in NADPH binding. Residues Val-299 and Glu-301 each contribute to the NADPH site.

It belongs to the NAD-dependent glycerol-3-phosphate dehydrogenase family.

The protein resides in the cytoplasm. It carries out the reaction sn-glycerol 3-phosphate + NAD(+) = dihydroxyacetone phosphate + NADH + H(+). The catalysed reaction is sn-glycerol 3-phosphate + NADP(+) = dihydroxyacetone phosphate + NADPH + H(+). It functions in the pathway membrane lipid metabolism; glycerophospholipid metabolism. Its function is as follows. Catalyzes the reduction of the glycolytic intermediate dihydroxyacetone phosphate (DHAP) to sn-glycerol 3-phosphate (G3P), the key precursor for phospholipid synthesis. This chain is Glycerol-3-phosphate dehydrogenase [NAD(P)+], found in Saccharophagus degradans (strain 2-40 / ATCC 43961 / DSM 17024).